The following is a 274-amino-acid chain: 2,3,4,5-tetrahydropyridine-2,6-dicarboxylate N-succinyltransferase (274 aa).

Substrate is bound by residues arginine 104 and aspartate 141.

It belongs to the transferase hexapeptide repeat family. In terms of assembly, homotrimer.

It localises to the cytoplasm. The catalysed reaction is (S)-2,3,4,5-tetrahydrodipicolinate + succinyl-CoA + H2O = (S)-2-succinylamino-6-oxoheptanedioate + CoA. Its pathway is amino-acid biosynthesis; L-lysine biosynthesis via DAP pathway; LL-2,6-diaminopimelate from (S)-tetrahydrodipicolinate (succinylase route): step 1/3. This Buchnera aphidicola subsp. Acyrthosiphon pisum (strain APS) (Acyrthosiphon pisum symbiotic bacterium) protein is 2,3,4,5-tetrahydropyridine-2,6-dicarboxylate N-succinyltransferase.